A 121-amino-acid polypeptide reads, in one-letter code: Large ribosomal subunit protein bL20 (121 aa).

This sequence belongs to the bacterial ribosomal protein bL20 family.

Its function is as follows. Binds directly to 23S ribosomal RNA and is necessary for the in vitro assembly process of the 50S ribosomal subunit. It is not involved in the protein synthesizing functions of that subunit. The chain is Large ribosomal subunit protein bL20 from Roseobacter denitrificans (strain ATCC 33942 / OCh 114) (Erythrobacter sp. (strain OCh 114)).